Here is a 944-residue protein sequence, read N- to C-terminus: Weak acid resistance protein 1 (944 aa).

The zn(2)-C6 fungal-type DNA-binding region spans 76-109 (CVCCHSLKQKCEPSDVNDIYRKPCRRCLKHKKLC). 2 disordered regions span residues 114–171 (SKRT…AKQF) and 197–225 (SYGAREAETTSTGEITTNNHTKSNGSVPT). Threonine 128 is modified (phosphothreonine). Composition is skewed to polar residues over residues 135–144 (VNVSTKSKGP) and 205–225 (TTSTGEITTNNHTKSNGSVPT).

In terms of assembly, homodimer. In terms of processing, phosphorylation is required for PDR12 induction.

Its subcellular location is the nucleus. Its function is as follows. transcription factor which binds to a weak acid response element (WARE) to mediate stress induction of PDR12 and FUN34, encoding an acid transporter and a putative ammonia transporter, respectively. The sequence is that of Weak acid resistance protein 1 (WAR1) from Saccharomyces cerevisiae (strain ATCC 204508 / S288c) (Baker's yeast).